A 156-amino-acid chain; its full sequence is Small ribosomal subunit protein eS19A (156 aa).

This sequence belongs to the eukaryotic ribosomal protein eS19 family.

The chain is Small ribosomal subunit protein eS19A (RpS19a) from Drosophila melanogaster (Fruit fly).